Here is a 105-residue protein sequence, read N- to C-terminus: Class II hydrophobin 1 (105 aa).

A signal peptide spans 1–15 (MQVLLIATLVASVLA). 4 cysteine pairs are disulfide-bonded: Cys-38–Cys-87, Cys-48–Cys-78, Cys-49–Cys-58, and Cys-88–Cys-99.

Belongs to the cerato-ulmin hydrophobin family. Homotetramer. Further self-assembles to form highly ordered films at water-air interfaces through intermolecular interactions.

The protein resides in the secreted. The protein localises to the cell wall. Functionally, aerial growth, conidiation, and dispersal of filamentous fungi in the environment rely upon a capability of their secreting small amphipathic proteins called hydrophobins (HPBs) with low sequence identity. Class I can self-assemble into an outermost layer of rodlet bundles on aerial cell surfaces, conferring cellular hydrophobicity that supports fungal growth, development and dispersal; whereas Class II form highly ordered films at water-air interfaces through intermolecular interactions but contribute nothing to the rodlet structure. HYD1 is a class II hydrophobin that plays roles in conidiation and cuticle-bypassing infection by regulating the transcripts of frequency clock protein frq, and velvet protein vosA, as well as primordium formation via the mitogen-activated protein kinase signaling pathway. Also participates in stress response, including tolerance of mycelia to osmotic and oxidative stresses, and conidia to high or low temperature. Acts as a defensive factor against Calcarisporium cordycipiticola infection, probably via the formation of a physical barrier to inhibit the pathogen infection owing to its hydrophobicity or binding to the effector of C.cordycipiticola, hindering the recognition of the pathogen. Finally, regulates the transcription of the AreA transcription factor at different developmental stages via a positive feedback loop. The chain is Class II hydrophobin 1 from Cordyceps militaris (Caterpillar fungus).